The sequence spans 411 residues: Cytosolic Fe-S cluster assembly factor narfl (411 aa).

Residues Cys-11, Cys-124, Cys-180, Cys-329, and Cys-333 each coordinate [4Fe-4S] cluster.

It belongs to the NARF family. In terms of assembly, component of the CIA complex.

Functionally, component of the cytosolic iron-sulfur protein assembly (CIA) complex, a multiprotein complex that mediates the incorporation of iron-sulfur cluster into extramitochondrial Fe/S proteins. This chain is Cytosolic Fe-S cluster assembly factor narfl (narfl), found in Danio rerio (Zebrafish).